Consider the following 37-residue polypeptide: Calcitonin gene-related peptide 1 (37 aa).

Cysteine 2 and cysteine 7 form a disulfide bridge. At phenylalanine 37 the chain carries Phenylalanine amide.

The protein belongs to the calcitonin family.

Its subcellular location is the secreted. Its function is as follows. CGRP1/CALCA is a peptide hormone that induces vasodilation mediated by the CALCRL-RAMP1 receptor complex. Dilates a variety of vessels including the coronary, cerebral and systemic vasculature. Its abundance in the CNS also points toward a neurotransmitter or neuromodulator role. It also elevates platelet cAMP. CGRP1 can also bind and activate CALCR-RAMP1 (AMYR1) receptor complex. The sequence is that of Calcitonin gene-related peptide 1 (CALCA) from Ovis aries (Sheep).